The sequence spans 494 residues: Cytochrome P450 monooxygenase ccsD (494 aa).

The chain crosses the membrane as a helical span at residues 5–25; it reads ISPRTLVLLAVTCSLLVLYFS. Position 438 (Cys438) interacts with heme. N-linked (GlcNAc...) asparagine glycosylation is found at Asn445 and Asn477.

Belongs to the cytochrome P450 family. It depends on heme as a cofactor.

Its subcellular location is the membrane. It functions in the pathway mycotoxin biosynthesis. Functionally, cytochrome P450 monooxygenase; part of the gene cluster that mediates the biosynthesis of a family of the mycotoxins cytochalasins E and K. The hybrid PKS-NRPS synthetase ccsA and the enoyl reductase ccsC are responsible for fusion of phenylalanine with an octaketide backbone and subsequent release of the stable tetramic acid precursor. The polyketide synthase module (PKS) of the PKS-NRPS ccsA is responsible for the synthesis of the octaketide backbone. The downstream nonribosomal peptide synthetase (NRPS) amidates the carboxyl end of the octaketide with a phenylalanine. A reductase-like domain (R) at the C-terminus catalyzes the reductive release of the polyketide-amino acid intermediate. Because ccsA lacks a designated enoylreductase (ER) domain, the required activity is provided the enoyl reductase ccsC. Upon formation of the 11-membered carbocycle-fused perhydroisoindolone intermediate, a number of oxidative steps are required to afford the final cytochalasin E and K, including two hydroxylations at C17 and C18, one alcohol oxidation at C17, one epoxidation at C6 and C7 and two Baeyer-Villiger oxidations. The oxidative modification at C17, C18 and the C6-C7 epoxidation are likely to be catalyzed by the two cytochrome P450 oxygenases ccsD and ccsG. CcsD may be responsible for the epoxidation of the C6-C7 double bond. CcsG may be responsible for the successive oxidative modifications at C17 and C18. The double Baeyer-Villiger oxidations of ketocytochalasin to precytochalasin and cytochalasin Z(16) are among the final steps leading to cytochalasin E and K and are catalyzed by ccsB. The first oxygen insertion step follows that of the classic BVMO mechanism, generating the ester precytochalasin. Release of precytochalasin into an aqueous environment can generate the shunt product iso-precytochalasin through spontaneous isomerization. Alternatively, precytochalasin can undergo further oxidation by ccsB to yield the in-line carbonate-containing cytochalasin Z(16). Cytochalasin Z(16) is a precursor to cytochalasin E and cytochalasin K, whereas iso-precytochalasin is a precursor to cytochalasin Z(17) and rosellichalasin. The hydrolyase ccsE may catalyze hydrolysis of epoxide bond in cytochalasin E to afford cytochalasin K. The function of ccsF has not been assigned but it may play a role in post-PKS-NRPS biosynthetic step, resistance or transport of cytochalasins and related PKS-NRPS products. The chain is Cytochrome P450 monooxygenase ccsD from Aspergillus clavatus (strain ATCC 1007 / CBS 513.65 / DSM 816 / NCTC 3887 / NRRL 1 / QM 1276 / 107).